Reading from the N-terminus, the 2053-residue chain is Nuclear pore complex protein Nup98-Nup96 (2053 aa).

Disordered regions lie at residues glycine 43–alanine 222, tyrosine 274–serine 617, glutamine 638–glycine 662, lysine 890–glycine 1027, and proline 1170–arginine 1243. A compositionally biased stretch (low complexity) spans serine 46–threonine 55. The segment covering glycine 56–glycine 66 has biased composition (gly residues). Low complexity predominate over residues alanine 67–proline 77. A compositionally biased stretch (gly residues) spans phenylalanine 78 to leucine 88. Over residues threonine 111 to serine 123 the composition is skewed to low complexity. A compositionally biased stretch (gly residues) spans proline 124–phenylalanine 133. Residues glycine 134–serine 147 show a composition bias toward low complexity. Residues alanine 166–glycine 195 are compositionally biased toward gly residues. Residues glycine 196–proline 212 show a composition bias toward low complexity. Gly residues predominate over residues threonine 276 to serine 285. Positions threonine 290–phenylalanine 299 are enriched in polar residues. A compositionally biased stretch (low complexity) spans glycine 300–threonine 318. Polar residues predominate over residues serine 319 to phenylalanine 334. Positions glycine 335–glycine 346 are enriched in low complexity. The segment covering methionine 367 to serine 378 has biased composition (polar residues). A compositionally biased stretch (low complexity) spans threonine 379–glutamine 393. Composition is skewed to polar residues over residues serine 394–serine 425 and threonine 459–glutamine 488. Positions glycine 489–threonine 508 are enriched in low complexity. Polar residues-rich tracts occupy residues serine 509–threonine 536 and glutamine 543–phenylalanine 555. Positions glycine 556 to threonine 567 are enriched in low complexity. Composition is skewed to polar residues over residues alanine 587–glycine 616 and glutamine 638–threonine 658. 2 stretches are compositionally biased toward low complexity: residues asparagine 896–serine 964 and asparagine 971–glutamine 998. A compositionally biased stretch (basic and acidic residues) spans lysine 999–phenylalanine 1015. The 140-residue stretch at arginine 1025 to phenylalanine 1164 folds into the Peptidase S59 domain. Over residues glutamine 1178–glutamine 1191 the composition is skewed to low complexity. Polar residues predominate over residues proline 1192–leucine 1204.

It belongs to the nucleoporin GLFG family. As to quaternary structure, nup98 interacts directly with Nup96. Post-translationally, autoproteolytically cleaved to yield Nup98 and Nup96 or Nup98 only, respectively.

It localises to the nucleus. The protein resides in the nuclear pore complex. Its subcellular location is the nucleus membrane. Functionally, nup98 and Nup96 play a role in the bidirectional transport across the nucleoporin complex (NPC). The repeat domain in Nup98 has a direct role in the transport. This chain is Nuclear pore complex protein Nup98-Nup96 (nup98), found in Dictyostelium discoideum (Social amoeba).